We begin with the raw amino-acid sequence, 449 residues long: MSHIKFDYSKVLDKFVAPHEVEYMQSQVTAADELIRKGTGAGSDFLGWLDLPEKYDREEFDRILKAAEQIKSDSDVLVVIGIGGSYLGAKAAIDFLNHHFANLQTKEERKAPQILYAGNSISSTYLADLVEYVADKDFSVNVISKSGTTTEPAIAFRVFKELLVKKYGQEEANKRIYATTDRQKGAVKVEADANGWGTFVVPDDIGGRFSVLTAVGLLSIAASGADIKALMEGANAARKDYTSDKISENEAYQYAAVRNILYRKGYATEILVNYEPSLQYFSEWWKQLAGESEGKDQKGIYPTSANFSTDLHSLGQFIQEGTRIMFETVVRVDKPRKNVLIPTLEEDLDGLGYLQGKDVDFVNKKATDGVLLAHTDGDVPNMYVTLPEQDAFTLGYTIYFFELAIALSGYLNAINPFDQPGVEAYKRNMFALLGKPGFEELSKELNARL.

Glu-291 (proton donor) is an active-site residue. Active-site residues include His-312 and Lys-426.

The protein belongs to the GPI family.

It localises to the cytoplasm. It carries out the reaction alpha-D-glucose 6-phosphate = beta-D-fructose 6-phosphate. Its pathway is carbohydrate biosynthesis; gluconeogenesis. The protein operates within carbohydrate degradation; glycolysis; D-glyceraldehyde 3-phosphate and glycerone phosphate from D-glucose: step 2/4. Functionally, catalyzes the reversible isomerization of glucose-6-phosphate to fructose-6-phosphate. The sequence is that of Glucose-6-phosphate isomerase from Streptococcus pneumoniae serotype 4 (strain ATCC BAA-334 / TIGR4).